Reading from the N-terminus, the 188-residue chain is Selenoprotein S B (188 aa).

The helical transmembrane segment at 29-49 threads the bilayer; the sequence is EALSNYGWYILLGCIVIYFLI. The segment covering 116 to 125 has biased composition (basic and acidic residues); the sequence is TWDRMQEGKS. A disordered region spans residues 116 to 188; the sequence is TWDRMQEGKS…RGPSSGGSUG (73 aa). Residues 136–147 show a composition bias toward low complexity; that stretch reads ASPRTSTSSSAP. Position 187 (Sec-187) is a non-standard amino acid, selenocysteine.

Belongs to the selenoprotein S family.

It localises to the endoplasmic reticulum membrane. It is found in the cytoplasm. In terms of biological role, involved in the degradation process of misfolded endoplasmic reticulum (ER) luminal proteins. Participates in the transfer of misfolded proteins from the ER to the cytosol, where they are destroyed by the proteasome in a ubiquitin-dependent manner. The chain is Selenoprotein S B (vimp-b) from Xenopus laevis (African clawed frog).